Here is a 363-residue protein sequence, read N- to C-terminus: Phosphoserine aminotransferase (363 aa).

Arg42 contributes to the L-glutamate binding site. Pyridoxal 5'-phosphate contacts are provided by residues 76-77, Trp102, Thr156, Asp175, and Gln198; that span reads GR. Position 199 is an N6-(pyridoxal phosphate)lysine (Lys199). A pyridoxal 5'-phosphate-binding site is contributed by 240-241; sequence NT.

This sequence belongs to the class-V pyridoxal-phosphate-dependent aminotransferase family. SerC subfamily. In terms of assembly, homodimer. The cofactor is pyridoxal 5'-phosphate.

Its subcellular location is the cytoplasm. It catalyses the reaction O-phospho-L-serine + 2-oxoglutarate = 3-phosphooxypyruvate + L-glutamate. The catalysed reaction is 4-(phosphooxy)-L-threonine + 2-oxoglutarate = (R)-3-hydroxy-2-oxo-4-phosphooxybutanoate + L-glutamate. The protein operates within amino-acid biosynthesis; L-serine biosynthesis; L-serine from 3-phospho-D-glycerate: step 2/3. Its pathway is cofactor biosynthesis; pyridoxine 5'-phosphate biosynthesis; pyridoxine 5'-phosphate from D-erythrose 4-phosphate: step 3/5. Functionally, catalyzes the reversible conversion of 3-phosphohydroxypyruvate to phosphoserine and of 3-hydroxy-2-oxo-4-phosphonooxybutanoate to phosphohydroxythreonine. This is Phosphoserine aminotransferase from Shewanella sp. (strain W3-18-1).